The chain runs to 106 residues: UPF0145 protein CLL_A2504 (106 aa).

Belongs to the UPF0145 family.

The sequence is that of UPF0145 protein CLL_A2504 from Clostridium botulinum (strain Eklund 17B / Type B).